The following is a 194-amino-acid chain: RNA polymerase II subunit A C-terminal domain phosphatase SSU72 like protein 3 (194 aa).

The protein belongs to the SSU72 phosphatase family.

It localises to the nucleus. The enzyme catalyses O-phospho-L-seryl-[protein] + H2O = L-seryl-[protein] + phosphate. It carries out the reaction O-phospho-L-threonyl-[protein] + H2O = L-threonyl-[protein] + phosphate. Its function is as follows. Protein phosphatase that catalyzes the dephosphorylation of the C-terminal domain of RNA polymerase II. Plays a role in RNA processing and termination. In Homo sapiens (Human), this protein is RNA polymerase II subunit A C-terminal domain phosphatase SSU72 like protein 3.